We begin with the raw amino-acid sequence, 304 residues long: N-acetyl-D-glucosamine kinase (304 aa).

ATP is bound by residues 4 to 11 (GLDIGGTK) and 133 to 140 (GFGGGFVL). The Zn(2+) site is built by His157, Cys178, Cys180, and Cys185.

The protein belongs to the ROK (NagC/XylR) family. NagK subfamily.

It catalyses the reaction N-acetyl-D-glucosamine + ATP = N-acetyl-D-glucosamine 6-phosphate + ADP + H(+). The protein operates within cell wall biogenesis; peptidoglycan recycling. In terms of biological role, catalyzes the phosphorylation of N-acetyl-D-glucosamine (GlcNAc) derived from cell-wall degradation, yielding GlcNAc-6-P. In Haemophilus influenzae (strain 86-028NP), this protein is N-acetyl-D-glucosamine kinase.